Consider the following 298-residue polypeptide: Urease accessory protein UreD 3 (298 aa).

Residues 1-30 are disordered; that stretch reads MADEAGTRSAGGRPIPAAEPLRPALSRQRS.

It belongs to the UreD family. UreD, UreF and UreG form a complex that acts as a GTP-hydrolysis-dependent molecular chaperone, activating the urease apoprotein by helping to assemble the nickel containing metallocenter of UreC. The UreE protein probably delivers the nickel.

Its subcellular location is the cytoplasm. Required for maturation of urease via the functional incorporation of the urease nickel metallocenter. The protein is Urease accessory protein UreD 3 of Methylorubrum extorquens (strain PA1) (Methylobacterium extorquens).